The following is a 134-amino-acid chain: MIEVGEYKVKEGLYYTKDHEWAQVLDDGTVLVGISDYAQKELGDLAYVELPEVGKEVSKGDVLCEIESVKAVSEVYAPVSGEVIEVNEALEDSPELLNEDPYENWIAKLKPTNLEEELKELMDAQAYAEYLRSL.

In terms of domain architecture, Lipoyl-binding spans 29–110; the sequence is TVLVGISDYA…PYENWIAKLK (82 aa). Lys-70 is modified (N6-lipoyllysine).

This sequence belongs to the GcvH family. The glycine cleavage system is composed of four proteins: P, T, L and H. (R)-lipoate is required as a cofactor.

The glycine cleavage system catalyzes the degradation of glycine. The H protein shuttles the methylamine group of glycine from the P protein to the T protein. The sequence is that of Probable glycine cleavage system H protein from Thermococcus kodakarensis (strain ATCC BAA-918 / JCM 12380 / KOD1) (Pyrococcus kodakaraensis (strain KOD1)).